The following is a 120-amino-acid chain: Protein VraC (120 aa).

In Staphylococcus epidermidis (strain ATCC 35984 / DSM 28319 / BCRC 17069 / CCUG 31568 / BM 3577 / RP62A), this protein is Protein VraC.